A 561-amino-acid polypeptide reads, in one-letter code: MKELLRTLISQGLAGCYADGSLSSGEFPSIIIEKPAHADHGDFATNVAMLLAKAEKKAPRMVAETLVSHLADGSGVCEKIEIAGPGFINFHLKDEAWRQTLLEVDQIGFEYGKSGVGGGKKIQVEFVSANPTGPLHIGHGRGAALGDTICRLLSATGWDVTREFYYNDAGQQIANLALSVQARCFGNGPDDPGWPSDGYQGEYIIDVARAYMARETVHADDQHVTAAGDPQDLEAIRRFAVAFLRREQDQDLAAFDVHFDVYSLESDLYADGSVERVVRRLVDSGHTYEQDDALWLRTTSFADDKDRVMRKSGGGYTYFVPDVAYHLRKWERGFTRVVNEQGADHHSTITRVRAGLQALDAGIPAGWPEYVLHQMVTVLRGGEEVKISKRAGSYVTLRDLIDEVGRDATRFFFVMRKPDSQLVFDIDLAKQKSLDNPVYYVQYAHARICSIFENAAEKGFVVPGADGVNLDQLIEPEEMAIVKALAFFPEVVEGSAANFEPHRIANYLQELAGLFHGFYNKNRVITEDSQLTAARLFLLKCVALTLKNALNLLGISAPEKM.

The short motif at Ala129–His139 is the 'HIGH' region element.

Belongs to the class-I aminoacyl-tRNA synthetase family. In terms of assembly, monomer.

The protein resides in the cytoplasm. It catalyses the reaction tRNA(Arg) + L-arginine + ATP = L-arginyl-tRNA(Arg) + AMP + diphosphate. This chain is Arginine--tRNA ligase, found in Geotalea daltonii (strain DSM 22248 / JCM 15807 / FRC-32) (Geobacter daltonii).